A 480-amino-acid chain; its full sequence is UDP-glycosyltransferase 72B1 (480 aa).

The active-site Proton acceptor is the H19. D117 (charge relay) is an active-site residue. UDP is bound by residues S277, W346, A347, and H364. Residues S277, W346, A347, H364, W367, N368, S369, E372, Y386, E388, and Q389 each coordinate UDP-alpha-D-glucose. Residues N368, S369, E372, and Y386 each contribute to the UDP site.

This sequence belongs to the UDP-glycosyltransferase family.

It catalyses the reaction hydroquinone + UDP-alpha-D-glucose = hydroquinone O-beta-D-glucopyranoside + UDP + H(+). Functionally, bifunctional O-glycosyltransferase and N-glycosyltransferase that can detoxify xenobiotics. Possesses high activity to metabolize the persistent pollutants 2,4,5-trichlorophenol (TCP) and 3,4-dichloroaniline (DCA). Also active on benzoates and benzoate derivatives in vitro. The sequence is that of UDP-glycosyltransferase 72B1 (UGT72B1) from Arabidopsis thaliana (Mouse-ear cress).